The primary structure comprises 309 residues: Vacuolar membrane protein YOR292C (309 aa).

Residues 1 to 52 (MPLQLFGRDQIVVHYDNGNMSNDDQNHQSVLGSWTRRAAAALRTLMNKRIQR) are Vacuolar-facing. N-linked (GlcNAc...) asparagine glycosylation occurs at Asn19. The helical transmembrane segment at 53 to 73 (ITLTHWLLLVIWVTSLWKFTS) threads the bilayer. Residues 74-81 (HYRQLYAN) lie on the Cytoplasmic side of the membrane. Residues 82–102 (SAVFATLCTNILLFGISDILA) form a helical membrane-spanning segment. Topologically, residues 103 to 183 (QSIACFYSYH…KTDTFDFFRW (81 aa)) are vacuolar. N-linked (GlcNAc...) asparagine glycosylation occurs at Asn121. The chain crosses the membrane as a helical span at residues 184 to 204 (GCFMFWGFFISFFQAPWYKFL). The Cytoplasmic segment spans residues 205–225 (NFFYTEDPTVVQVFERVLSDQ). Residues 226-246 (LLYSPISLYCFFMFSNYVMEG) traverse the membrane as a helical segment. The Vacuolar segment spans residues 247 to 260 (GDKDTLGKKIQRLY). Residues 261-281 (ISTLGCNYLVWPMVQFINFLI) traverse the membrane as a helical segment. Over 282–309 (MPRDFQAPFSSSVGVVWNCFLSMRNASK) the chain is Cytoplasmic.

The protein belongs to the peroxisomal membrane protein PXMP2/4 family. N-glycosylated.

It is found in the vacuole membrane. The polypeptide is Vacuolar membrane protein YOR292C (Saccharomyces cerevisiae (strain ATCC 204508 / S288c) (Baker's yeast)).